The following is a 337-amino-acid chain: m7GpppX diphosphatase (337 aa).

The interval 1–35 (MADAAPQLGKRKRELDVEEAHAASTEEKEAGVGNG) is disordered. Position 2 is an N-acetylalanine (alanine 2). The nuclear localization signal (NLS) motif lies at 10 to 13 (KRKR). Over residues 13–30 (RELDVEEAHAASTEEKEA) the composition is skewed to basic and acidic residues. Serine 24 and serine 101 each carry phosphoserine. Lysine 138 and lysine 142 each carry N6-acetyllysine. Positions 142 to 154 (KYLRQDLRLIRET) match the nuclear export sequence (NES) motif. Residues tryptophan 175, glutamate 185, aspartate 205, lysine 207, and 268–279 (HYLPSYYHLHVH) contribute to the substrate site. A Histidine triad motif motif is present at residues 275 to 279 (HLHVH). Histidine 277 functions as the Nucleophile in the catalytic mechanism.

Belongs to the HIT family. Homodimer. Associates with components of the exosome multienzyme ribonuclease complex, such as EXOSC3 and EXOSC4. Interacts with NDOR1. As to expression, detected in liver, brain, kidney, testis and prostate.

It localises to the cytoplasm. The protein resides in the nucleus. It carries out the reaction a 5'-end (N(7)-methyl 5'-triphosphoguanosine)-ribonucleoside in mRNA + H2O = N(7)-methyl-GMP + a 5'-end diphospho-ribonucleoside in mRNA + 2 H(+). The hydrolytic product 7-methylguanosine diphosphate (m7GDP) efficiently inhibits the decapping scavenger activity and acts as a competitive inhibitor in vitro. Inhibited by 2,4-diaminoquinazoline. Its function is as follows. Decapping scavenger enzyme that catalyzes the cleavage of a residual cap structure following the degradation of mRNAs by the 3'-&gt;5' exosome-mediated mRNA decay pathway. Hydrolyzes cap analog structures like 7-methylguanosine nucleoside triphosphate (m7GpppG) with up to 10 nucleotide substrates (small capped oligoribonucleotides) and specifically releases 5'-phosphorylated RNA fragments and 7-methylguanosine monophosphate (m7GMP). Cleaves cap analog structures like tri-methyl guanosine nucleoside triphosphate (m3(2,2,7)GpppG) with very poor efficiency. Does not hydrolyze unmethylated cap analog (GpppG) and shows no decapping activity on intact m7GpppG-capped mRNA molecules longer than 25 nucleotides. Does not hydrolyze 7-methylguanosine diphosphate (m7GDP) to m7GMP. May also play a role in the 5'-&gt;3 mRNA decay pathway; m7GDP, the downstream product released by the 5'-&gt;3' mRNA mediated decapping activity, may be also converted by DCPS to m7GMP. Binds to m7GpppG and strongly to m7GDP. Plays a role in first intron splicing of pre-mRNAs. Inhibits activation-induced cell death. This chain is m7GpppX diphosphatase (DCPS), found in Homo sapiens (Human).